A 175-amino-acid polypeptide reads, in one-letter code: DPY30 domain-containing protein 1 (175 aa).

Over residues 94 to 112 the composition is skewed to basic and acidic residues; the sequence is QQKEKQKSEDFETGQEKSF. Disordered regions lie at residues 94 to 134 and 152 to 175; these read QQKE…QAEE and APNL…SAPP.

This sequence belongs to the dpy-30 family. As to quaternary structure, component of the axonemal radial spoke complex 1 (RS1), at least composed of spoke head proteins RSPH1, RSPH3, RSPH9 and the cilia-specific component RSPH4A or sperm-specific component RSPH6A, spoke stalk proteins RSPH14, DNAJB13, DYDC1, ROPN1L and NME5, and the anchor protein IQUB. Interacts with SH3GL3.

The protein localises to the cytoplasm. It localises to the cytoskeleton. Its subcellular location is the flagellum axoneme. Functionally, functions as part of axonemal radial spoke complexes that play an important part in the motility of sperm and cilia. Plays a crucial role during acrosome biogenesis. The sequence is that of DPY30 domain-containing protein 1 (Dydc1) from Mus musculus (Mouse).